We begin with the raw amino-acid sequence, 130 residues long: Small ribosomal subunit protein uS8 (130 aa).

It belongs to the universal ribosomal protein uS8 family. In terms of assembly, part of the 30S ribosomal subunit.

Its function is as follows. One of the primary rRNA binding proteins, it binds directly to 16S rRNA central domain where it helps coordinate assembly of the platform of the 30S subunit. The sequence is that of Small ribosomal subunit protein uS8 from Halorubrum lacusprofundi (strain ATCC 49239 / DSM 5036 / JCM 8891 / ACAM 34).